Reading from the N-terminus, the 316-residue chain is Acetyl-coenzyme A carboxylase carboxyl transferase subunit beta (316 aa).

The CoA carboxyltransferase N-terminal domain occupies leucine 39–methionine 308. 4 residues coordinate Zn(2+): cysteine 43, cysteine 46, cysteine 62, and cysteine 65. The C4-type zinc-finger motif lies at cysteine 43–cysteine 65.

This sequence belongs to the AccD/PCCB family. In terms of assembly, acetyl-CoA carboxylase is a heterohexamer composed of biotin carboxyl carrier protein (AccB), biotin carboxylase (AccC) and two subunits each of ACCase subunit alpha (AccA) and ACCase subunit beta (AccD). It depends on Zn(2+) as a cofactor.

Its subcellular location is the cytoplasm. The enzyme catalyses N(6)-carboxybiotinyl-L-lysyl-[protein] + acetyl-CoA = N(6)-biotinyl-L-lysyl-[protein] + malonyl-CoA. It participates in lipid metabolism; malonyl-CoA biosynthesis; malonyl-CoA from acetyl-CoA: step 1/1. In terms of biological role, component of the acetyl coenzyme A carboxylase (ACC) complex. Biotin carboxylase (BC) catalyzes the carboxylation of biotin on its carrier protein (BCCP) and then the CO(2) group is transferred by the transcarboxylase to acetyl-CoA to form malonyl-CoA. The sequence is that of Acetyl-coenzyme A carboxylase carboxyl transferase subunit beta from Nostoc punctiforme (strain ATCC 29133 / PCC 73102).